A 227-amino-acid polypeptide reads, in one-letter code: Cytidylate kinase (227 aa).

12–20 contributes to the ATP binding site; it reads GPSGAGKGT.

This sequence belongs to the cytidylate kinase family. Type 1 subfamily.

The protein resides in the cytoplasm. It carries out the reaction CMP + ATP = CDP + ADP. The catalysed reaction is dCMP + ATP = dCDP + ADP. The sequence is that of Cytidylate kinase from Xanthomonas oryzae pv. oryzae (strain PXO99A).